Consider the following 282-residue polypeptide: Lipoyl synthase (282 aa).

[4Fe-4S] cluster contacts are provided by Cys37, Cys42, Cys48, Cys63, Cys67, Cys70, and Ser275. A Radical SAM core domain is found at 49 to 264; it reads WSRGTATFMI…RLVGIEKGFR (216 aa).

The protein belongs to the radical SAM superfamily. Lipoyl synthase family. [4Fe-4S] cluster is required as a cofactor.

The protein resides in the cytoplasm. The enzyme catalyses [[Fe-S] cluster scaffold protein carrying a second [4Fe-4S](2+) cluster] + N(6)-octanoyl-L-lysyl-[protein] + 2 oxidized [2Fe-2S]-[ferredoxin] + 2 S-adenosyl-L-methionine + 4 H(+) = [[Fe-S] cluster scaffold protein] + N(6)-[(R)-dihydrolipoyl]-L-lysyl-[protein] + 4 Fe(3+) + 2 hydrogen sulfide + 2 5'-deoxyadenosine + 2 L-methionine + 2 reduced [2Fe-2S]-[ferredoxin]. It functions in the pathway protein modification; protein lipoylation via endogenous pathway; protein N(6)-(lipoyl)lysine from octanoyl-[acyl-carrier-protein]: step 2/2. Its function is as follows. Catalyzes the radical-mediated insertion of two sulfur atoms into the C-6 and C-8 positions of the octanoyl moiety bound to the lipoyl domains of lipoate-dependent enzymes, thereby converting the octanoylated domains into lipoylated derivatives. The sequence is that of Lipoyl synthase from Porphyromonas gingivalis (strain ATCC 33277 / DSM 20709 / CIP 103683 / JCM 12257 / NCTC 11834 / 2561).